Consider the following 2616-residue polypeptide: Serine protease ndl (2616 aa).

A signal peptide spans 1-43 (MNYNMDEMEATRLLRHPRRWWSIGFGKRIVAISILVIIVLLFS). Phosphoserine is present on residues serine 215 and serine 220. The stretch at 261–269 (ISWIIDGHD) is one WIID 1 repeat. Asparagine 291 carries an N-linked (GlcNAc...) asparagine glycan. One copy of the WIID 2 repeat lies at 320–328 (ISWILDHFD). Asparagine 347 carries an N-linked (GlcNAc...) asparagine glycan. Residues 352–375 (SASSEPIVDTENTNSDHVPTTENG) are disordered. The N-linked (GlcNAc...) asparagine glycan is linked to asparagine 379. The stretch at 399 to 407 (FDWILDGEE) is one WIID 3 repeat. Residue asparagine 417 is glycosylated (N-linked (GlcNAc...) asparagine). 2 WIID repeats span residues 446-454 (FDWIIDGRE) and 477-485 (FDWIIDGEE). N-linked (GlcNAc...) asparagine glycosylation is found at asparagine 492 and asparagine 515. One copy of the WIID 6 repeat lies at 528–536 (FDWIIDGGE). Positions 537-547 (SSGEVSTSSTS) are enriched in low complexity. The disordered stretch occupies residues 537–574 (SSGEVSTSSTSQPKLTTREAISNPESPRSSHPLDNPTS). The segment covering 548–565 (QPKLTTREAISNPESPRS) has biased composition (polar residues). Serine 574 and serine 581 each carry phosphoserine. The N-linked (GlcNAc...) asparagine glycan is linked to asparagine 598. O-linked (Xyl...) (glycosaminoglycan) serine glycosylation is present at serine 794. The segment at 798 to 817 (GQGANIFSKNASPQKPTNGQ) is disordered. The span at 804 to 817 (FSKNASPQKPTNGQ) shows a compositional bias: polar residues. Asparagine 827 is a glycosylation site (N-linked (GlcNAc...) asparagine). An O-linked (Xyl...) (glycosaminoglycan) serine glycan is attached at serine 829. N-linked (GlcNAc...) asparagine glycosylation is present at asparagine 861. 2 consecutive LDL-receptor class A domains span residues 889–929 (SRCP…ACTC) and 955–1006 (FGCE…QCSM). Intrachain disulfides connect cysteine 891–cysteine 905, cysteine 899–cysteine 918, and cysteine 912–cysteine 927. The LDL-receptor class A 2; truncated domain maps to 929–956 (CADRVDEERLCDGYEDCPMGEDELGCFG). 3 disulfide bridges follow: cysteine 957–cysteine 982, cysteine 964–cysteine 995, and cysteine 989–cysteine 1004. Asparagine 975 is a glycosylation site (N-linked (GlcNAc...) asparagine). Positions 1031-1033 (RGD) match the Cell attachment site motif. Asparagine 1064 is a glycosylation site (N-linked (GlcNAc...) asparagine). A phosphoserine mark is found at serine 1134 and serine 1136. The 239-residue stretch at 1145–1383 (IVGGSYTSAL…YLDWLEMATT (239 aa)) folds into the Peptidase S1 1 domain. An intrachain disulfide couples cysteine 1170 to cysteine 1186. Active-site charge relay system residues include histidine 1185 and aspartate 1233. 6 disulfide bridges follow: cysteine 1276-cysteine 1338, cysteine 1305-cysteine 1317, cysteine 1328-cysteine 1359, cysteine 1396-cysteine 1408, cysteine 1401-cysteine 1421, and cysteine 1415-cysteine 1430. The Charge relay system role is filled by serine 1332. Residues 1394 to 1432 (QLCPGFICVWGGKRCIAKRQRCDRNVDCLGGEDEVGCTY) form the LDL-receptor class A 4 domain. Asparagine 1445 carries an N-linked (GlcNAc...) asparagine glycan. Disordered regions lie at residues 1530 to 1557 (FTVSDSATSPSTLLPTTTNPSTWLPSTN) and 1683 to 1704 (PTTTTESAKTTTTHSSSTHSEK). Low complexity-rich tracts occupy residues 1537–1557 (TSPSTLLPTTTNPSTWLPSTN) and 1683–1700 (PTTTTESAKTTTTHSSST). One can recognise an LDL-receptor class A 5; truncated domain in the interval 1713–1743 (FVCKKMSQIVDIMMRCDRKVDCEDGTDELDC). Disulfide bonds link cysteine 1728/cysteine 1745, cysteine 1734/cysteine 1764, cysteine 1758/cysteine 1773, cysteine 1776/cysteine 1789, cysteine 1783/cysteine 1802, and cysteine 1796/cysteine 1811. The LDL-receptor class A 6; truncated domain occupies 1745-1775 (CKDYLKGSLKGLICDGKADCEDLTDEQNCVE). In terms of domain architecture, LDL-receptor class A 7 spans 1774-1813 (VECQSNEFRCPLSKTCLPLSSRCDNKVDCKFKEDEKDCFA). N-linked (GlcNAc...) asparagine glycosylation is found at asparagine 1878, asparagine 1956, and asparagine 2023. In terms of domain architecture, Peptidase S1 2 spans 2027-2301 (LVNEQLHEAI…LQDIIDKPSC (275 aa)). Residues cysteine 2055 and cysteine 2071 are joined by a disulfide bond. N-linked (GlcNAc...) asparagine glycosylation is found at asparagine 2144, asparagine 2173, asparagine 2197, asparagine 2237, and asparagine 2269. Cysteine 2177 and cysteine 2230 are disulfide-bonded. LDL-receptor class A domains lie at 2308–2346 (PDCSTHRCPLGTCLPQAAMCNGRSDCHDGSDEEETKCRQ), 2349–2389 (QQCA…ICSC), and 2419–2459 (CNCT…YCFG). 6 disulfide bridges follow: cysteine 2310-cysteine 2320, cysteine 2315-cysteine 2333, cysteine 2327-cysteine 2344, cysteine 2351-cysteine 2364, cysteine 2358-cysteine 2377, and cysteine 2371-cysteine 2387. The region spanning 2387-2419 (CSCFTYLQATDPSKICDGKRNCWDKSDESSVLC) is the LDL-receptor class A 10; truncated domain. N-linked (GlcNAc...) asparagine glycosylation is present at asparagine 2420. 3 disulfide bridges follow: cysteine 2421–cysteine 2435, cysteine 2428–cysteine 2448, and cysteine 2442–cysteine 2457. 2 N-linked (GlcNAc...) asparagine glycosylation sites follow: asparagine 2556 and asparagine 2601.

Belongs to the peptidase S1 family. Requires cleavage for activation (presumably). In terms of tissue distribution, follicle.

The protein resides in the secreted. It localises to the extracellular space. Its subcellular location is the extracellular matrix. In terms of biological role, component of the extracellular signaling pathway that establishes the dorsal-ventral pathway of the embryo. A protease cascade involving ndl, gd, snk and ea results in activation of the spz Toll receptor ligand; acts upstream of gd, snk and ea and is required for proteolytic processing of gd. Activation of ea requires activation of the ndl-gd-snk protease cascade and sulfation of a vitelline membrane component by pip. Localized activation of the Toll receptor in the ventral region of the embryo defines cell identities along the dorsal-ventral continuum. The polypeptide is Serine protease ndl (Drosophila melanogaster (Fruit fly)).